A 461-amino-acid polypeptide reads, in one-letter code: Chromosomal replication initiator protein DnaA (461 aa).

Residues 1–90 (MAVSLWQQCI…RPSARPVAPA (90 aa)) form a domain I, interacts with DnaA modulators region. The domain II stretch occupies residues 91 to 124 (PVAAKPVNRQTKAQVGTTSFNTQAEPIINPNHRS). Positions 125 to 341 (NINPTYQFDN…GALNRVIANA (217 aa)) are domain III, AAA+ region. Gly169, Gly171, Lys172, and Thr173 together coordinate ATP. A domain IV, binds dsDNA region spans residues 342–461 (NFTGRPITID…YANLIRTLSS (120 aa)).

It belongs to the DnaA family. As to quaternary structure, oligomerizes as a right-handed, spiral filament on DNA at oriC.

The protein resides in the cytoplasm. Plays an essential role in the initiation and regulation of chromosomal replication. ATP-DnaA binds to the origin of replication (oriC) to initiate formation of the DNA replication initiation complex once per cell cycle. Binds the DnaA box (a 9 base pair repeat at the origin) and separates the double-stranded (ds)DNA. Forms a right-handed helical filament on oriC DNA; dsDNA binds to the exterior of the filament while single-stranded (ss)DNA is stabiized in the filament's interior. The ATP-DnaA-oriC complex binds and stabilizes one strand of the AT-rich DNA unwinding element (DUE), permitting loading of DNA polymerase. After initiation quickly degrades to an ADP-DnaA complex that is not apt for DNA replication. Binds acidic phospholipids. This is Chromosomal replication initiator protein DnaA from Shewanella frigidimarina (strain NCIMB 400).